We begin with the raw amino-acid sequence, 176 residues long: Methylmalonyl-CoA epimerase, mitochondrial (176 aa).

The N-terminal 36 residues, 1–36 (MARVLKAAAANAVGLFSRLQAPIPTVRASSTSQPLD), are a transit peptide targeting the mitochondrion. One can recognise a VOC domain in the interval 47–176 (RLNHVAIAVP…GGVLVELEQA (130 aa)). Co(2+) is bound at residue H50. Residue K114 is modified to N6-succinyllysine. A Co(2+)-binding site is contributed by H122. At K150 the chain carries N6-acetyllysine; alternate. K150 carries the post-translational modification N6-succinyllysine; alternate. E172 serves as a coordination point for Co(2+).

The protein belongs to the methylmalonyl-CoA epimerase family.

It localises to the mitochondrion. It carries out the reaction (R)-methylmalonyl-CoA = (S)-methylmalonyl-CoA. Methylmalonyl-CoA epimerase involved in propionyl-CoA metabolism. The sequence is that of Methylmalonyl-CoA epimerase, mitochondrial from Homo sapiens (Human).